The following is a 634-amino-acid chain: Threonine--tRNA ligase (634 aa).

In terms of domain architecture, TGS spans 1–61 (MFEVKLKDGS…DSDCEVQFVK (61 aa)). The tract at residues 242-532 (DHRKIGKEMG…LIEHYAGKFP (291 aa)) is catalytic. Zn(2+) contacts are provided by cysteine 333, histidine 384, and histidine 509.

It belongs to the class-II aminoacyl-tRNA synthetase family. In terms of assembly, homodimer. Requires Zn(2+) as cofactor.

Its subcellular location is the cytoplasm. The catalysed reaction is tRNA(Thr) + L-threonine + ATP = L-threonyl-tRNA(Thr) + AMP + diphosphate + H(+). In terms of biological role, catalyzes the attachment of threonine to tRNA(Thr) in a two-step reaction: L-threonine is first activated by ATP to form Thr-AMP and then transferred to the acceptor end of tRNA(Thr). Also edits incorrectly charged L-seryl-tRNA(Thr). This is Threonine--tRNA ligase from Finegoldia magna (strain ATCC 29328 / DSM 20472 / WAL 2508) (Peptostreptococcus magnus).